We begin with the raw amino-acid sequence, 70 residues long: MTFKVYYQADKTKRPVRENTQSLYIEADSEAEALLMVEHNTDYNIEFVEQLDEKALAYEKQNPNFKLTTF.

This sequence belongs to the RNA polymerase subunit epsilon family. RNAP is composed of a core of 2 alpha, a beta and a beta' subunit. The core is associated with a delta subunit, and at least one of epsilon or omega. When a sigma factor is associated with the core the holoenzyme is formed, which can initiate transcription.

The catalysed reaction is RNA(n) + a ribonucleoside 5'-triphosphate = RNA(n+1) + diphosphate. A non-essential component of RNA polymerase (RNAP). The protein is DNA-directed RNA polymerase subunit epsilon of Limosilactobacillus reuteri (strain DSM 20016) (Lactobacillus reuteri).